The following is a 348-amino-acid chain: Gamma-glutamyl hydrolase 1 (348 aa).

Positions 1–23 (MIDNNCLYKEELNRNSYSGLAKE) are cleaved as a signal peptide. The Gamma-glutamyl hydrolase domain occupies 46-342 (SPDPNLNYRP…RGYDEVYIFT (297 aa)). Cysteine 156 (nucleophile) is an active-site residue. Histidine 269 is a catalytic residue.

This sequence belongs to the peptidase C26 family. As to expression, highly expressed in roots and at lower levels in leaves, stems and siliques.

It is found in the vacuole. It localises to the secreted. The protein resides in the extracellular space. The protein localises to the cell wall. It catalyses the reaction (6S)-5,6,7,8-tetrahydrofolyl-(gamma-L-Glu)(n) + (n-1) H2O = (6S)-5,6,7,8-tetrahydrofolate + (n-1) L-glutamate. Functionally, cleaves the polyglutamate sidechains of folate polyglutamates in the vacuole. Is important for polyglutamyl tail length determination before vacuolar exit. Plays a role in folate stability and intracellular folate content. This chain is Gamma-glutamyl hydrolase 1 (GGH1), found in Arabidopsis thaliana (Mouse-ear cress).